The following is a 215-amino-acid chain: Riboflavin synthase (215 aa).

Lumazine-binding repeat units lie at residues 1 to 96 and 97 to 193; these read MFTG…FGGH and FVSG…YRFL. 2,4-dihydroxypteridine-binding positions include 4–6, 47–49, 61–66, 100–102, Lys-135, 144–146, and 158–163; these read GIV, CLT, DVMPET, GHV, SST, and SVIPHT.

Homotrimer.

The enzyme catalyses 2 6,7-dimethyl-8-(1-D-ribityl)lumazine + H(+) = 5-amino-6-(D-ribitylamino)uracil + riboflavin. It functions in the pathway cofactor biosynthesis; riboflavin biosynthesis; riboflavin from 2-hydroxy-3-oxobutyl phosphate and 5-amino-6-(D-ribitylamino)uracil: step 2/2. In terms of biological role, catalyzes the dismutation of two molecules of 6,7-dimethyl-8-ribityllumazine, resulting in the formation of riboflavin and 5-amino-6-(D-ribitylamino)uracil. In Bacillus amyloliquefaciens (Bacillus velezensis), this protein is Riboflavin synthase (ribE).